Consider the following 353-residue polypeptide: Probable peptidoglycan glycosyltransferase FtsW (353 aa).

The next 8 membrane-spanning stretches (helical) occupy residues 26-46, 53-73, 115-135, 137-157, 162-182, 242-262, 288-308, and 314-334; these read IFYFFLIFLLSFILLRIPMSF, LILIISIFLLTIVLLIGKSVH, FWGFLKPITIIIIQSVLLLAE, DLGTVIVLFLTTLSVLFLSGV, FFIIIFFVTLIITALVLFEPY, IIGEELGYIGCFLILLMIFFI, IGLWFSFQTLINIGAVTGILP, and LPLISYGGSSLIVNLMAICIL.

It belongs to the SEDS family. FtsW subfamily.

It is found in the cell inner membrane. It carries out the reaction [GlcNAc-(1-&gt;4)-Mur2Ac(oyl-L-Ala-gamma-D-Glu-L-Lys-D-Ala-D-Ala)](n)-di-trans,octa-cis-undecaprenyl diphosphate + beta-D-GlcNAc-(1-&gt;4)-Mur2Ac(oyl-L-Ala-gamma-D-Glu-L-Lys-D-Ala-D-Ala)-di-trans,octa-cis-undecaprenyl diphosphate = [GlcNAc-(1-&gt;4)-Mur2Ac(oyl-L-Ala-gamma-D-Glu-L-Lys-D-Ala-D-Ala)](n+1)-di-trans,octa-cis-undecaprenyl diphosphate + di-trans,octa-cis-undecaprenyl diphosphate + H(+). Its pathway is cell wall biogenesis; peptidoglycan biosynthesis. Functionally, peptidoglycan polymerase that is essential for cell division. The protein is Probable peptidoglycan glycosyltransferase FtsW of Buchnera aphidicola subsp. Schizaphis graminum (strain Sg).